Here is a 499-residue protein sequence, read N- to C-terminus: MVLFHSQASCSKRIEADAIILPFWKLKDKVKCAASIAKEYESLYQVALDNFSAKSREVELIYSCGQGKEKRIVLLGLGKNEELSSQEVLEAYAKATRLLRKAKCTTVNVVLPTISELRISIEDFLTNLTSGILSLNYNYPKYTKESSNDPLLTKVNVLGIVPKIADRIFRKEENIFEGVYLTRDLVNGNADEVTPQKLANIAKGMAKEFPSMDVKILNKDAILKEKMGLLAAVAKGSAVDPCFIVLTYQGKPKSKDHTVLIGKGVTFDSGGLDLKPGKAMLTMKEDMAGAATVLGILSGIAALELPVNVTAIVPATENAIDAAAYKMGDVYTGMSGLSVEIGSTDAEGRLILADAITYALKYCNPTRIIDFATLTGAMVVSLGEDVAGFFSNNDVLAQDLSEASAETSEALWRLPLVEKYNKALHSDIADMKNIGSNRAGAITAALFLKRFLEDQPVAWAHLDIAGTAYREKDEDLYPKYASGFGVRCLIYYIEKFLSK.

Mn(2+) is bound by residues Lys263 and Asp268. The active site involves Lys275. Residues Asp286, Asp345, and Glu347 each contribute to the Mn(2+) site. The active site involves Arg349.

The protein belongs to the peptidase M17 family. Mn(2+) serves as cofactor.

Its subcellular location is the cytoplasm. It catalyses the reaction Release of an N-terminal amino acid, Xaa-|-Yaa-, in which Xaa is preferably Leu, but may be other amino acids including Pro although not Arg or Lys, and Yaa may be Pro. Amino acid amides and methyl esters are also readily hydrolyzed, but rates on arylamides are exceedingly low.. It carries out the reaction Release of an N-terminal amino acid, preferentially leucine, but not glutamic or aspartic acids.. Presumably involved in the processing and regular turnover of intracellular proteins. Catalyzes the removal of unsubstituted N-terminal amino acids from various peptides. The chain is Probable cytosol aminopeptidase from Chlamydia caviae (strain ATCC VR-813 / DSM 19441 / 03DC25 / GPIC) (Chlamydophila caviae).